The following is a 902-amino-acid chain: Aconitate hydratase A (902 aa).

[4Fe-4S] cluster contacts are provided by Cys-441, Cys-507, and Cys-510.

The protein belongs to the aconitase/IPM isomerase family. In terms of assembly, monomer. Requires [4Fe-4S] cluster as cofactor.

It catalyses the reaction citrate = D-threo-isocitrate. The enzyme catalyses (2S,3R)-3-hydroxybutane-1,2,3-tricarboxylate = 2-methyl-cis-aconitate + H2O. The protein operates within carbohydrate metabolism; tricarboxylic acid cycle; isocitrate from oxaloacetate: step 2/2. Its pathway is organic acid metabolism; propanoate degradation. In terms of biological role, involved in the catabolism of short chain fatty acids (SCFA) via the tricarboxylic acid (TCA)(acetyl degradation route) and probably the 2-methylcitrate cycle I (propionate degradation route). Catalyzes the reversible isomerization of citrate to isocitrate via cis-aconitate. Also able to catalyze the hydration of cis-homoaconitate to yield (R)-homocitrate, but with a lower efficiency. Could catalyze the hydration of 2-methyl-cis-aconitate to yield (2R,3S)-2-methylisocitrate. The apo form of AcnA functions as a RNA-binding regulatory protein. The chain is Aconitate hydratase A (acoA) from Thermus thermophilus (strain ATCC 27634 / DSM 579 / HB8).